A 289-amino-acid polypeptide reads, in one-letter code: Ribosomal protein L11 methyltransferase (289 aa).

Positions 134, 155, 177, and 225 each coordinate S-adenosyl-L-methionine.

Belongs to the methyltransferase superfamily. PrmA family.

It is found in the cytoplasm. It catalyses the reaction L-lysyl-[protein] + 3 S-adenosyl-L-methionine = N(6),N(6),N(6)-trimethyl-L-lysyl-[protein] + 3 S-adenosyl-L-homocysteine + 3 H(+). Methylates ribosomal protein L11. This chain is Ribosomal protein L11 methyltransferase, found in Parasynechococcus marenigrum (strain WH8102).